Here is a 494-residue protein sequence, read N- to C-terminus: UPF0371 protein spr0309 (494 aa).

Belongs to the UPF0371 family.

The protein is UPF0371 protein spr0309 of Streptococcus pneumoniae (strain ATCC BAA-255 / R6).